The following is a 353-amino-acid chain: S-adenosylmethionine:tRNA ribosyltransferase-isomerase (353 aa).

The protein belongs to the QueA family. As to quaternary structure, monomer.

It localises to the cytoplasm. It catalyses the reaction 7-aminomethyl-7-carbaguanosine(34) in tRNA + S-adenosyl-L-methionine = epoxyqueuosine(34) in tRNA + adenine + L-methionine + 2 H(+). It participates in tRNA modification; tRNA-queuosine biosynthesis. Its function is as follows. Transfers and isomerizes the ribose moiety from AdoMet to the 7-aminomethyl group of 7-deazaguanine (preQ1-tRNA) to give epoxyqueuosine (oQ-tRNA). This chain is S-adenosylmethionine:tRNA ribosyltransferase-isomerase, found in Rickettsia bellii (strain OSU 85-389).